Here is a 360-residue protein sequence, read N- to C-terminus: D-alanine--D-alanine ligase (360 aa).

Residues 134–343 (KILAQRVGVP…YTELITRLIE (210 aa)) form the ATP-grasp domain. 169–224 (AEKLGRDMFVKPSNQGSSVGVSHVTNADEYAAALKEAFKYDDKVLVEETVPGTEVE) is an ATP binding site. 3 residues coordinate Mg(2+): Asp-297, Glu-310, and Asn-312.

The protein belongs to the D-alanine--D-alanine ligase family. The cofactor is Mg(2+). Mn(2+) is required as a cofactor.

The protein resides in the cytoplasm. It catalyses the reaction 2 D-alanine + ATP = D-alanyl-D-alanine + ADP + phosphate + H(+). It participates in cell wall biogenesis; peptidoglycan biosynthesis. Its function is as follows. Cell wall formation. The sequence is that of D-alanine--D-alanine ligase from Lactobacillus helveticus (strain DPC 4571).